A 159-amino-acid chain; its full sequence is C-type lectin BJcuL (159 aa).

The first 24 residues, 1-24 (MGRFLFVASSACWFVFLSLSGAKG), serve as a signal peptide directing secretion. 4 disulfide bridges follow: Cys27/Cys38, Cys55/Cys155, Cys62/Cys157, and Cys130/Cys147. The region spanning 34-156 (MNGLCYKIFN…CESKNAFLCQ (123 aa)) is the C-type lectin domain. Positions 120, 122, 128, 143, and 144 each coordinate Ca(2+). Positions 120–122 (QPD) match the Galactose-binding motif.

This sequence belongs to the true venom lectin family. In terms of assembly, homodecamer of disulfide-linked dimers arranged in two 5-fold symmetric pentamers. Binds the gentamicin group of aminoglycoside antibiotics at the dimeric interface near the intermolecular disulfide bond. As to expression, expressed by the venom gland.

Its subcellular location is the secreted. With respect to regulation, hemagglutination activity is inhibited by lactose (MIC=2.5 mM), galactose (MIC=10 mM), and raffinose. Is very weakly or not inhibited by gentamicin, kanamycin, glucose and sucrose. Galactose-binding lectin which recognizes specific carbohydrate structures and agglutinates a variety of animal cells by binding to cell-surface glycoproteins and glycolipids. Calcium-dependent lectin. Also binds lactose and raffinose. Shows high hemagglutinating activity on mammalian erythrocytes. It also involved in immunological functions, since it is able of inducing potent neutrophil activation. In vivo, it causes edema and increases vascular permeability after injection into mouse hind paws (10-100 ug/paw). In anesthetized rats, it decreases the blood pressure by approximately 15%, with a rapid return to the resting level. Is an effective inhibitor of cell growth in some cancer cell lines, especially against renal and pancreatic cancer cell lines, human breast and ovarian carcinoma, glioblastoma and a bovine brain microvascular endothelial cell line. The polypeptide is C-type lectin BJcuL (Bothrops jararacussu (Jararacussu)).